Consider the following 514-residue polypeptide: 2,3-bisphosphoglycerate-independent phosphoglycerate mutase (514 aa).

Asp-14 and Ser-64 together coordinate Mn(2+). Catalysis depends on Ser-64, which acts as the Phosphoserine intermediate. Substrate contacts are provided by residues His-125, 155–156, Arg-187, Arg-193, 263–266, and Lys-336; these read RD and RADR. Residues Asp-403, His-407, Asp-444, His-445, and His-463 each coordinate Mn(2+).

The protein belongs to the BPG-independent phosphoglycerate mutase family. In terms of assembly, monomer. Mn(2+) is required as a cofactor.

The enzyme catalyses (2R)-2-phosphoglycerate = (2R)-3-phosphoglycerate. It participates in carbohydrate degradation; glycolysis; pyruvate from D-glyceraldehyde 3-phosphate: step 3/5. Functionally, catalyzes the interconversion of 2-phosphoglycerate and 3-phosphoglycerate. The chain is 2,3-bisphosphoglycerate-independent phosphoglycerate mutase from Shigella dysenteriae serotype 1 (strain Sd197).